The following is a 266-amino-acid chain: UPF0328 protein ECU05_1610/ECU11_0120 (266 aa).

Belongs to the UPF0328 family.

This is UPF0328 protein ECU05_1610/ECU11_0120 from Encephalitozoon cuniculi (strain GB-M1) (Microsporidian parasite).